A 1142-amino-acid polypeptide reads, in one-letter code: Potassium channel subfamily T member 2 (1142 aa).

At 1-63 the chain is on the cytoplasmic side; it reads MVDLESEVPP…KNQRSSLRIR (63 aa). The chain crosses the membrane as a helical span at residues 64–84; that stretch reads LFNFSLKLLSCLLYIIRVLLE. Residues 85-101 are Extracellular-facing; that stretch reads KPSQGNDWSHIFWVNRS. N-linked (GlcNAc...) asparagine glycosylation is present at asparagine 99. The helical transmembrane segment at 102–122 threads the bilayer; sequence LPLWGLQVSVALISLFETILL. The Cytoplasmic portion of the chain corresponds to 123-137; that stretch reads GYLSYKGNIWEQILR. Residues 138–158 form a helical membrane-spanning segment; it reads VPFILEIINAVPFIISIFWPT. The Extracellular segment spans residues 159–160; the sequence is LR. A helical membrane pass occupies residues 161–173; that stretch reads NLFVPVFLNCWLA. Residues 174 to 198 are Cytoplasmic-facing; the sequence is KHALENMINDLHRAIQRTQSAMFNQ. Residues 199 to 219 form a helical membrane-spanning segment; the sequence is VLILISTLLCLIFTCICGIQH. Residues 220–228 lie on the Extracellular side of the membrane; that stretch reads LERIGKKLN. Positions 229–249 form an intramembrane region, pore-forming; that stretch reads LFDSLYFCIVTFSTVGFGDVT. The Extracellular segment spans residues 250–256; the sequence is PETWSSK. Residues 257–277 form a helical membrane-spanning segment; sequence LFVVAMICVALVVLPIQFEQL. At 278-1142 the chain is on the cytoplasmic side; it reads AYLWMERQKS…VQDSREETQL (865 aa). RCK N-terminal domains follow at residues 299–435 and 725–865; these read EKHV…DHVV and NKLI…CYSL. 2 disordered regions span residues 989 to 1044 and 1118 to 1142; these read DTKD…EKIT and PNSE…ETQL. Basic residues predominate over residues 1017–1037; sequence LRRKSMQWARRLSRKGPKHSG. Over residues 1118–1129 the composition is skewed to polar residues; the sequence is PNSEPSRKNSIC.

It belongs to the potassium channel family. Calcium-activated (TC 1.A.1.3) subfamily. KCa4.2/KCNT2 sub-subfamily. Homotetramer. Forms heteromer with KCNT1; heteromeric channels differ from those of homomeric channels in their unitary conductance, kinetic behavior, subcellular localization, and response to activation of protein kinase C. Post-translationally, phosphorylated by protein kinase C. Phosphorylation of the C-terminal domain inhibits channel activity. In terms of tissue distribution, detected in brain, and at low levels in heart. Detected in brainstem, including auditory neurons such as the medial nucleus of the trapezoid body. Detected in the olfactory bulb, red nucleus, facial nucleus, pontine nucleus, oculomotor nucleus, substantia nigra, deep cerebellar nuclei, vestibular nucleus, and the thalamus. Detected in hippocampal CA1, CA2, and CA3 regions, the dentate gyrus, supraoptic nucleus, hypothalamus, dorsal root ganglion, and cortical layers II, III, and V. Detected in striatum cholinergic interneurons.

It is found in the cell membrane. The enzyme catalyses K(+)(in) = K(+)(out). With respect to regulation, are normally in a closed state unless activated by an increase in intracellular Na(+) and Cl(-). Inhibited upon stimulation of G-protein coupled receptors, such as CHRM1 and GRM1. There is conflicting data about the effect of ATP on KNCT2 channels activity. Intracellular ATP was initially report to inhibit the channel activity. However, others studies conclude that KNCT2 channels are not inhibited by intracellular ATP. In terms of biological role, sodium-activated and chloride-activated potassium channel. Produces rapidly activating outward rectifier K(+) currents. Contributes to regulate neuronal excitability. This is Potassium channel subfamily T member 2 (Kcnt2) from Rattus norvegicus (Rat).